We begin with the raw amino-acid sequence, 324 residues long: Zinc transporter ZIP1 (324 aa).

Topologically, residues 1-30 (MGPWGEPELLVWRPEAVASEPSVPVGLEVK) are extracellular. A helical membrane pass occupies residues 31–51 (LGALVLLLLLTLICSLVPVCV). Residues 52–68 (LRRSGANHEASASGQKA) are Cytoplasmic-facing. The chain crosses the membrane as a helical span at residues 69 to 89 (LSLVSCFAGGVFLATCLLDLL). Over 90 to 104 (PDYLAAIDEALEALH) the chain is Extracellular. Residues 105-125 (VTLQFPLQEFILAMGFFLVLV) traverse the membrane as a helical segment. The Cytoplasmic portion of the chain corresponds to 126–179 (MEQITLAYKEQTSPPHPEETRALLGTVNGGPQHWHDGPGIPQAGGTPAAPSALR). The helical transmembrane segment at 180 to 200 (ACVLVFSLALHSVFEGLAVGL) threads the bilayer. At 201 to 206 (QRDRAR) the chain is on the extracellular side. Residues 207 to 227 (AMELCLALLLHKGILAVSLSL) form a helical membrane-spanning segment. Residues 228-237 (RLLQSHLRVQ) lie on the Cytoplasmic side of the membrane. A helical membrane pass occupies residues 238-258 (VVAGCGILFSCMTPLGIGLGA). Over 259–272 (ALAESAGPLHQLAQ) the chain is Extracellular. A helical transmembrane segment spans residues 273-293 (SVLEGMAAGTFLYITFLEILP). Residues 294–303 (QELATSEQRI) lie on the Cytoplasmic side of the membrane. Residues 304-324 (LKVILLLAGFALLTGLLFVQI) form a helical membrane-spanning segment.

It belongs to the ZIP transporter (TC 2.A.5) family. Ubiquitous, except in the pancreas. Highest levels seen in kidney, salivary gland and placenta.

Its subcellular location is the cell membrane. It is found in the endoplasmic reticulum membrane. It carries out the reaction Zn(2+)(in) = Zn(2+)(out). Its function is as follows. Transporter for the divalent cation Zn(2+). Mediates the influx of Zn(2+) into cells from extracellular space. This is Zinc transporter ZIP1 (Slc39a1) from Mus musculus (Mouse).